The sequence spans 165 residues: Chorismate pyruvate-lyase (165 aa).

The substrate site is built by Met-35, Arg-77, Leu-115, and Glu-156.

Belongs to the UbiC family. Monomer.

It is found in the cytoplasm. The catalysed reaction is chorismate = 4-hydroxybenzoate + pyruvate. It functions in the pathway cofactor biosynthesis; ubiquinone biosynthesis. Removes the pyruvyl group from chorismate, with concomitant aromatization of the ring, to provide 4-hydroxybenzoate (4HB) for the ubiquinone pathway. The sequence is that of Chorismate pyruvate-lyase from Escherichia coli O127:H6 (strain E2348/69 / EPEC).